The sequence spans 386 residues: WD repeat-containing protein 89 (386 aa).

WD repeat units lie at residues 21 to 65 (KEPT…LLRE), 68 to 107 (GSPG…EKPV), 112 to 156 (GYPS…QDLS), 167 to 207 (THSD…EEDA), 213 to 253 (NSVS…TDEP), and 318 to 357 (GHAA…KTFT).

The polypeptide is WD repeat-containing protein 89 (Wdr89) (Mus musculus (Mouse)).